The following is a 1012-amino-acid chain: Structural polyprotein (1012 aa).

Asp-30 contacts a divalent metal cation. Residues Ala-514–Ala-755 enclose the Peptidase S50 domain. The active-site Nucleophile is the Ser-653. Residue Lys-692 is part of the active site. Residues Met-972 to Glu-1012 form a disordered region. Over residues Arg-975–Pro-986 the composition is skewed to basic residues. The segment at Ile-1003–Glu-1012 is interaction with VP1 protein.

Homotrimer. A central divalent metal stabilizes the VP2 trimer. Interacts with host ITGA4/ITGB1. As to quaternary structure, homodimer. Interacts (via C-terminus) with VP1 in the cytoplasm. Interacts with VP2. Post-translationally, specific enzymatic cleavages yield mature proteins. The capsid assembly seems to be regulated by polyprotein processing. The protease VP4 cleaves itself off the polyprotein, thus releasing pre-VP2 and VP3 within the infected cell. During capsid assembly, the C-terminus of pre-VP2 is further processed by VP4, giving rise to VP2, the external capsid protein and three small peptides that all stay closely associated with the capsid.

It is found in the virion. The protein localises to the host cytoplasm. Functionally, capsid protein VP2 self assembles to form an icosahedral capsid with a T=13 symmetry, about 70 nm in diameter, and consisting of 260 VP2 trimers. The capsid encapsulates the genomic dsRNA. VP2 is also involved in attachment and entry into the host cell by interacting with host ITGA4/ITGB1. The precursor of VP2 plays an important role in capsid assembly. First, pre-VP2 and VP2 oligomers assemble to form a procapsid. Then, the pre-VP2 intermediates may be processed into VP2 proteins by proteolytic cleavage mediated by VP4 to obtain the mature virion. The final capsid is composed of pentamers and hexamers but VP2 has a natural tendency to assemble into all-pentameric structures. Therefore pre-VP2 may be required to allow formation of the hexameric structures. In terms of biological role, protease VP4 is a serine protease that cleaves the polyprotein into its final products. Pre-VP2 is first partially cleaved, and may be completely processed by VP4 upon capsid maturation. Its function is as follows. Capsid protein VP3 plays a key role in virion assembly by providing a scaffold for the capsid made of VP2. May self-assemble to form a T=4-like icosahedral inner-capsid composed of at least 180 trimers. Plays a role in genomic RNA packaging by recruiting VP1 into the capsid and interacting with the dsRNA genome segments to form a ribonucleoprotein complex. Additionally, the interaction of the VP3 C-terminal tail with VP1 removes the inherent structural blockade of the polymerase active site. Thus, VP3 can also function as a transcriptional activator. Functionally, structural peptide 1 is a small peptide derived from pre-VP2 C-terminus. It destabilizes and perforates cell membranes, suggesting a role during entry. Structural peptide 2 is a small peptide derived from pVP2 C-terminus. It is not essential for the virus viability, but viral growth is affected when missing. In terms of biological role, structural peptide 3 is a small peptide derived from pVP2 C-terminus. It is not essential for the virus viability, but viral growth is affected when missing. Its function is as follows. Structural peptide 4 is a small peptide derived from pVP2 C-terminus. It is essential for the virus viability. This is Structural polyprotein from Gallus gallus (Chicken).